The primary structure comprises 110 residues: UPF0235 protein Mpop_2087 (110 aa).

It belongs to the UPF0235 family.

The polypeptide is UPF0235 protein Mpop_2087 (Methylorubrum populi (strain ATCC BAA-705 / NCIMB 13946 / BJ001) (Methylobacterium populi)).